The following is a 708-amino-acid chain: MKPIKKSITYGRHTLTIETGEIAKQAHGAVIVSMDDTVVLVTAVGDKKTKPGQDFFPLTVDYQEKFYSAGRIPGSFFKREGRPSEKETLTSRLIDRPIRPLFPDGFYNEVQVVAMVLSSDTEIDADIPAMIGTSAALILSGIPFDGPVGAARVGYINNEYILNPTTTQLKESQLNLVVAGTQKAVLMVESEADELSEDVMLGAVTYGHDQMQQVIDMINELADEAGVTAWDWQPAEQDLSLVEKVTQLAEADLRNAFRLKQKSARVEAINEIWQRVFTELKVGTEEGPSEQAVREIGFALEARIVRNSILDGESRIDGRGTRTVRPITIRHGVLPRTHGSALFTRGETQALAITTLGTARDEQKIDALQGDYSERFMLHYNMPPFATGETGRVGTPKRREIGHGRLAKRALLAVIPPVEEFGYSMRVVSEVTESNGSSSMASVCGGCLSLMDAGVPLKAHVAGIAMGLIKEGNRFAVLTDILGDEDHLGDMDFKVAGTEHGITALQMDIKIQGITKEIMQVALLQAKEGRLHILEIMKQSLPIARESISVHAPRIIKFKINPEKIRDVIGKGGAVIRALTEETGTTIDISDDGSVTIACVSSEGGEQARKRIEDITADVEVGRIYEGTVLKLLDFGAIVSVLPGKDGLLHISQIANERVENVADHLKEGQTVRVKVLEADEKGRLRLSMKAASISTEITADNPDNTEK.

Mg(2+)-binding residues include aspartate 486 and aspartate 492. Positions proline 553–isoleucine 612 constitute a KH domain. An S1 motif domain is found at glycine 622–lysine 690.

The protein belongs to the polyribonucleotide nucleotidyltransferase family. It depends on Mg(2+) as a cofactor.

The protein resides in the cytoplasm. It catalyses the reaction RNA(n+1) + phosphate = RNA(n) + a ribonucleoside 5'-diphosphate. Functionally, involved in mRNA degradation. Catalyzes the phosphorolysis of single-stranded polyribonucleotides processively in the 3'- to 5'-direction. The chain is Polyribonucleotide nucleotidyltransferase from Nitrosomonas europaea (strain ATCC 19718 / CIP 103999 / KCTC 2705 / NBRC 14298).